A 355-amino-acid chain; its full sequence is Phosphate acyltransferase (355 aa).

This sequence belongs to the PlsX family. Homodimer. Probably interacts with PlsY.

It localises to the cytoplasm. The enzyme catalyses a fatty acyl-[ACP] + phosphate = an acyl phosphate + holo-[ACP]. It participates in lipid metabolism; phospholipid metabolism. Catalyzes the reversible formation of acyl-phosphate (acyl-PO(4)) from acyl-[acyl-carrier-protein] (acyl-ACP). This enzyme utilizes acyl-ACP as fatty acyl donor, but not acyl-CoA. This Erythrobacter litoralis (strain HTCC2594) protein is Phosphate acyltransferase.